The sequence spans 70 residues: Small ribosomal subunit protein bS21 (70 aa).

It belongs to the bacterial ribosomal protein bS21 family.

The polypeptide is Small ribosomal subunit protein bS21 (Helicobacter hepaticus (strain ATCC 51449 / 3B1)).